The following is a 595-amino-acid chain: Chaperone protein HscA homolog (595 aa).

The protein belongs to the heat shock protein 70 family.

Functionally, chaperone involved in the maturation of iron-sulfur cluster-containing proteins. Has a low intrinsic ATPase activity which is markedly stimulated by HscB. The polypeptide is Chaperone protein HscA homolog (Rickettsia conorii (strain ATCC VR-613 / Malish 7)).